The sequence spans 38 residues: MRTTGYIVWGILIGKKGKLEEMCIDFVVKLDAKLYLNF.

This is an uncharacterized protein from Haemophilus influenzae (strain ATCC 51907 / DSM 11121 / KW20 / Rd).